Reading from the N-terminus, the 388-residue chain is Dual-specificity RNA methyltransferase RlmN (388 aa).

The active-site Proton acceptor is the glutamate 109. In terms of domain architecture, Radical SAM core spans 115–354; the sequence is EEDRATLCVS…TIVRKTRGDD (240 aa). A disulfide bridge connects residues cysteine 122 and cysteine 359. [4Fe-4S] cluster contacts are provided by cysteine 129, cysteine 133, and cysteine 136. S-adenosyl-L-methionine is bound by residues 183 to 184, serine 215, 237 to 239, and asparagine 316; these read GE and SLH. Cysteine 359 serves as the catalytic S-methylcysteine intermediate.

Belongs to the radical SAM superfamily. RlmN family. [4Fe-4S] cluster serves as cofactor.

The protein localises to the cytoplasm. It carries out the reaction adenosine(2503) in 23S rRNA + 2 reduced [2Fe-2S]-[ferredoxin] + 2 S-adenosyl-L-methionine = 2-methyladenosine(2503) in 23S rRNA + 5'-deoxyadenosine + L-methionine + 2 oxidized [2Fe-2S]-[ferredoxin] + S-adenosyl-L-homocysteine. It catalyses the reaction adenosine(37) in tRNA + 2 reduced [2Fe-2S]-[ferredoxin] + 2 S-adenosyl-L-methionine = 2-methyladenosine(37) in tRNA + 5'-deoxyadenosine + L-methionine + 2 oxidized [2Fe-2S]-[ferredoxin] + S-adenosyl-L-homocysteine. Specifically methylates position 2 of adenine 2503 in 23S rRNA and position 2 of adenine 37 in tRNAs. m2A2503 modification seems to play a crucial role in the proofreading step occurring at the peptidyl transferase center and thus would serve to optimize ribosomal fidelity. In Klebsiella pneumoniae subsp. pneumoniae (strain ATCC 700721 / MGH 78578), this protein is Dual-specificity RNA methyltransferase RlmN.